The following is a 218-amino-acid chain: 3-dehydroquinate dehydratase (218 aa).

3-dehydroquinate contacts are provided by residues 29-31 (EFR) and R56. The active-site Proton donor/acceptor is H116. Catalysis depends on K142, which acts as the Schiff-base intermediate with substrate. 3 residues coordinate 3-dehydroquinate: R180, S200, and Q204.

It belongs to the type-I 3-dehydroquinase family. Homodimer.

The catalysed reaction is 3-dehydroquinate = 3-dehydroshikimate + H2O. It participates in metabolic intermediate biosynthesis; chorismate biosynthesis; chorismate from D-erythrose 4-phosphate and phosphoenolpyruvate: step 3/7. Involved in the third step of the chorismate pathway, which leads to the biosynthesis of aromatic amino acids. Catalyzes the cis-dehydration of 3-dehydroquinate (DHQ) and introduces the first double bond of the aromatic ring to yield 3-dehydroshikimate. This is 3-dehydroquinate dehydratase from Methanococcus maripaludis (strain C5 / ATCC BAA-1333).